The sequence spans 245 residues: 1-(5-phosphoribosyl)-5-[(5-phosphoribosylamino)methylideneamino] imidazole-4-carboxamide isomerase (245 aa).

D7 (proton acceptor) is an active-site residue. D129 functions as the Proton donor in the catalytic mechanism.

It belongs to the HisA/HisF family.

The protein resides in the cytoplasm. It catalyses the reaction 1-(5-phospho-beta-D-ribosyl)-5-[(5-phospho-beta-D-ribosylamino)methylideneamino]imidazole-4-carboxamide = 5-[(5-phospho-1-deoxy-D-ribulos-1-ylimino)methylamino]-1-(5-phospho-beta-D-ribosyl)imidazole-4-carboxamide. The protein operates within amino-acid biosynthesis; L-histidine biosynthesis; L-histidine from 5-phospho-alpha-D-ribose 1-diphosphate: step 4/9. This chain is 1-(5-phosphoribosyl)-5-[(5-phosphoribosylamino)methylideneamino] imidazole-4-carboxamide isomerase, found in Salmonella arizonae (strain ATCC BAA-731 / CDC346-86 / RSK2980).